Here is a 220-residue protein sequence, read N- to C-terminus: UPF0319 protein YccT (220 aa).

A signal peptide spans Met-1 to Ala-20.

The protein belongs to the UPF0319 family.

The polypeptide is UPF0319 protein YccT (Escherichia coli (strain 55989 / EAEC)).